The primary structure comprises 93 residues: Pyrimidine/purine nucleoside phosphorylase (93 aa).

It belongs to the nucleoside phosphorylase PpnP family.

The enzyme catalyses a purine D-ribonucleoside + phosphate = a purine nucleobase + alpha-D-ribose 1-phosphate. It carries out the reaction adenosine + phosphate = alpha-D-ribose 1-phosphate + adenine. The catalysed reaction is cytidine + phosphate = cytosine + alpha-D-ribose 1-phosphate. It catalyses the reaction guanosine + phosphate = alpha-D-ribose 1-phosphate + guanine. The enzyme catalyses inosine + phosphate = alpha-D-ribose 1-phosphate + hypoxanthine. It carries out the reaction thymidine + phosphate = 2-deoxy-alpha-D-ribose 1-phosphate + thymine. The catalysed reaction is uridine + phosphate = alpha-D-ribose 1-phosphate + uracil. It catalyses the reaction xanthosine + phosphate = alpha-D-ribose 1-phosphate + xanthine. Functionally, catalyzes the phosphorolysis of diverse nucleosides, yielding D-ribose 1-phosphate and the respective free bases. Can use uridine, adenosine, guanosine, cytidine, thymidine, inosine and xanthosine as substrates. Also catalyzes the reverse reactions. This is Pyrimidine/purine nucleoside phosphorylase from Shewanella pealeana (strain ATCC 700345 / ANG-SQ1).